The chain runs to 356 residues: DNA polymerase IV (356 aa).

The UmuC domain maps to Ile6–Gly187. Mg(2+) is bound by residues Asp10 and Asp105. Glu106 is a catalytic residue.

This sequence belongs to the DNA polymerase type-Y family. As to quaternary structure, monomer. Requires Mg(2+) as cofactor.

The protein resides in the cytoplasm. It carries out the reaction DNA(n) + a 2'-deoxyribonucleoside 5'-triphosphate = DNA(n+1) + diphosphate. In terms of biological role, poorly processive, error-prone DNA polymerase involved in untargeted mutagenesis. Copies undamaged DNA at stalled replication forks, which arise in vivo from mismatched or misaligned primer ends. These misaligned primers can be extended by PolIV. Exhibits no 3'-5' exonuclease (proofreading) activity. May be involved in translesional synthesis, in conjunction with the beta clamp from PolIII. This is DNA polymerase IV from Staphylococcus aureus (strain Mu50 / ATCC 700699).